The chain runs to 228 residues: MQKLKQQVFEANMELPRYGLATFTWGNVSAIDRERGLVVIKPSGVAYETMKAADMVVVDMSGKVVEGEYRPSSDTATHLELYRRYPSLGGIVHTHSTHATAWAQAGLAIPALGTTHADYFFGDIPCTRGLSEEEVQGEYELNTGKVIIETLGNAEPLHTPGIVVYQHGPFAWGKDAHDAVHNAVVMEEVAKMAWIARSINPQLNHIDSFLMNKHFMRKHGPNAYYGQK.

Substrate-binding positions include 26-27, 43-44, and 72-73; these read GN, SG, and SS. Zn(2+) is bound by residues aspartate 74, histidine 93, and histidine 95. Aspartate 118 functions as the Proton donor/acceptor in the catalytic mechanism. A Zn(2+)-binding site is contributed by histidine 167. Tyrosine 225 acts as the Proton donor/acceptor in catalysis.

The protein belongs to the aldolase class II family. AraD/FucA subfamily. Zn(2+) is required as a cofactor.

It carries out the reaction L-ribulose 5-phosphate = D-xylulose 5-phosphate. It functions in the pathway cofactor degradation; L-ascorbate degradation; D-xylulose 5-phosphate from L-ascorbate: step 4/4. Functionally, catalyzes the isomerization of L-ribulose 5-phosphate to D-xylulose 5-phosphate. Is involved in the anaerobic L-ascorbate utilization. The sequence is that of L-ribulose-5-phosphate 4-epimerase UlaF from Escherichia coli (strain ATCC 8739 / DSM 1576 / NBRC 3972 / NCIMB 8545 / WDCM 00012 / Crooks).